The primary structure comprises 267 residues: Ribosomal RNA small subunit methyltransferase A (267 aa).

6 residues coordinate S-adenosyl-L-methionine: histidine 13, leucine 15, glycine 40, glutamate 61, aspartate 85, and asparagine 105.

This sequence belongs to the class I-like SAM-binding methyltransferase superfamily. rRNA adenine N(6)-methyltransferase family. RsmA subfamily.

Its subcellular location is the cytoplasm. It carries out the reaction adenosine(1518)/adenosine(1519) in 16S rRNA + 4 S-adenosyl-L-methionine = N(6)-dimethyladenosine(1518)/N(6)-dimethyladenosine(1519) in 16S rRNA + 4 S-adenosyl-L-homocysteine + 4 H(+). Specifically dimethylates two adjacent adenosines (A1518 and A1519) in the loop of a conserved hairpin near the 3'-end of 16S rRNA in the 30S particle. May play a critical role in biogenesis of 30S subunits. The polypeptide is Ribosomal RNA small subunit methyltransferase A (Bacteroides thetaiotaomicron (strain ATCC 29148 / DSM 2079 / JCM 5827 / CCUG 10774 / NCTC 10582 / VPI-5482 / E50)).